The chain runs to 324 residues: Ribose-phosphate pyrophosphokinase (324 aa).

ATP is bound by residues 45–47 and 104–105; these read NGE and RQ. Histidine 138 and aspartate 178 together coordinate Mg(2+). The active site involves lysine 201. D-ribose 5-phosphate contacts are provided by residues arginine 203, aspartate 229, and 233-237; that span reads DTGGT.

Belongs to the ribose-phosphate pyrophosphokinase family. Class I subfamily. As to quaternary structure, homohexamer. It depends on Mg(2+) as a cofactor.

The protein resides in the cytoplasm. The enzyme catalyses D-ribose 5-phosphate + ATP = 5-phospho-alpha-D-ribose 1-diphosphate + AMP + H(+). It functions in the pathway metabolic intermediate biosynthesis; 5-phospho-alpha-D-ribose 1-diphosphate biosynthesis; 5-phospho-alpha-D-ribose 1-diphosphate from D-ribose 5-phosphate (route I): step 1/1. Involved in the biosynthesis of the central metabolite phospho-alpha-D-ribosyl-1-pyrophosphate (PRPP) via the transfer of pyrophosphoryl group from ATP to 1-hydroxyl of ribose-5-phosphate (Rib-5-P). The polypeptide is Ribose-phosphate pyrophosphokinase (Streptomyces avermitilis (strain ATCC 31267 / DSM 46492 / JCM 5070 / NBRC 14893 / NCIMB 12804 / NRRL 8165 / MA-4680)).